Consider the following 274-residue polypeptide: 2,3,4,5-tetrahydropyridine-2,6-dicarboxylate N-succinyltransferase (274 aa).

Substrate is bound by residues Arg-104 and Asp-141.

It belongs to the transferase hexapeptide repeat family. In terms of assembly, homotrimer.

The protein localises to the cytoplasm. The catalysed reaction is (S)-2,3,4,5-tetrahydrodipicolinate + succinyl-CoA + H2O = (S)-2-succinylamino-6-oxoheptanedioate + CoA. The protein operates within amino-acid biosynthesis; L-lysine biosynthesis via DAP pathway; LL-2,6-diaminopimelate from (S)-tetrahydrodipicolinate (succinylase route): step 1/3. In Shewanella sp. (strain ANA-3), this protein is 2,3,4,5-tetrahydropyridine-2,6-dicarboxylate N-succinyltransferase.